We begin with the raw amino-acid sequence, 572 residues long: Methionine--tRNA ligase (572 aa).

The 'HIGH' region signature appears at 11–21 (PYINGVKHLGN). Zn(2+) contacts are provided by cysteine 143, cysteine 146, cysteine 156, and cysteine 159. A 'KMSKS' region motif is present at residues 341–345 (KFSTS). Residue threonine 344 coordinates ATP.

The protein belongs to the class-I aminoacyl-tRNA synthetase family. MetG type 1 subfamily. As to quaternary structure, monomer. Zn(2+) serves as cofactor.

The protein resides in the cytoplasm. It carries out the reaction tRNA(Met) + L-methionine + ATP = L-methionyl-tRNA(Met) + AMP + diphosphate. Is required not only for elongation of protein synthesis but also for the initiation of all mRNA translation through initiator tRNA(fMet) aminoacylation. The protein is Methionine--tRNA ligase of Maricaulis maris (strain MCS10) (Caulobacter maris).